The chain runs to 105 residues: Heat shock protein HspQ (105 aa).

Belongs to the HspQ family.

Its subcellular location is the cytoplasm. Involved in the degradation of certain denaturated proteins, including DnaA, during heat shock stress. The chain is Heat shock protein HspQ from Blochmanniella pennsylvanica (strain BPEN).